A 305-amino-acid polypeptide reads, in one-letter code: Glycine--tRNA ligase alpha subunit (305 aa).

It belongs to the class-II aminoacyl-tRNA synthetase family. As to quaternary structure, tetramer of two alpha and two beta subunits.

Its subcellular location is the cytoplasm. It catalyses the reaction tRNA(Gly) + glycine + ATP = glycyl-tRNA(Gly) + AMP + diphosphate. This Streptococcus pneumoniae (strain Hungary19A-6) protein is Glycine--tRNA ligase alpha subunit.